Reading from the N-terminus, the 190-residue chain is MRVILASTSPRRSQILSLLGIEFEVIPAKVEEEVIPGKPVLTARKLAKEKALSVWRENRDAVVIGADTLVFLGNEIIGKPKDEKDAVNILKKLSGKWHSVVTALCVYSPEKVFLTHDIAKVKFRELSKEEIISYVKSGEPMDKAGAYGVQGFGATIVERIHGNFYTVMGLPIVKLYKILRELNLLAGTFS.

The active-site Proton acceptor is the aspartate 67.

This sequence belongs to the Maf family. YhdE subfamily. Requires a divalent metal cation as cofactor.

It localises to the cytoplasm. It carries out the reaction dTTP + H2O = dTMP + diphosphate + H(+). The catalysed reaction is UTP + H2O = UMP + diphosphate + H(+). In terms of biological role, nucleoside triphosphate pyrophosphatase that hydrolyzes dTTP and UTP. May have a dual role in cell division arrest and in preventing the incorporation of modified nucleotides into cellular nucleic acids. The chain is dTTP/UTP pyrophosphatase from Aquifex aeolicus (strain VF5).